The sequence spans 161 residues: RNA pyrophosphohydrolase (161 aa).

The region spanning 9–155 is the Nudix hydrolase domain; it reads PYRPCVGVML…KRRVYRQVVD (147 aa). Residues 44-65 carry the Nudix box motif; that stretch reads GGIDDGEELHPAALRELSEETG.

The protein belongs to the Nudix hydrolase family. RppH subfamily. A divalent metal cation serves as cofactor.

Its function is as follows. Accelerates the degradation of transcripts by removing pyrophosphate from the 5'-end of triphosphorylated RNA, leading to a more labile monophosphorylated state that can stimulate subsequent ribonuclease cleavage. The polypeptide is RNA pyrophosphohydrolase (Novosphingobium aromaticivorans (strain ATCC 700278 / DSM 12444 / CCUG 56034 / CIP 105152 / NBRC 16084 / F199)).